Consider the following 1080-residue polypeptide: Zorya protein ZorD (1080 aa).

In terms of domain architecture, Helicase ATP-binding spans 596–779 (LRSPEETAGC…WSLFDFAQPG (184 aa)). The region spanning 904–1069 (KLNWLLKILA…DMLCATPDLS (166 aa)) is the Helicase C-terminal domain.

In terms of biological role, component of antiviral defense system Zorya type I, composed of ZorA, ZorB, ZorC and ZorD. Expression of Zorya type I in E.coli (strain MG1655) confers 10,000-fold resistance to phage SECphi27, 100-fold resistance to lambda, and 10-fold resistance to T7. While most T7 infected Zorya-containing cells undergo abortive infection, a minority produce viable phage progeny. These eventually accumulate to a high multiplicity of infection, leading to culture collapse by 2 hours after initial infection. ZorA and ZorB probably assemble in the cell inner membrane and exert their effect there. This may have ATPase activity. The chain is Zorya protein ZorD from Escherichia coli O139:H28 (strain E24377A / ETEC).